Here is a 153-residue protein sequence, read N- to C-terminus: Arginine repressor (153 aa).

This sequence belongs to the ArgR family.

The protein resides in the cytoplasm. It functions in the pathway amino-acid biosynthesis; L-arginine biosynthesis [regulation]. Its function is as follows. Regulates arginine biosynthesis genes. This is Arginine repressor from Glaesserella parasuis serovar 5 (strain SH0165) (Haemophilus parasuis).